Here is a 252-residue protein sequence, read N- to C-terminus: MTQPPGQPVFIRLGPPPDEPNQFVVEGAPRSYPPDVLARLEVDAKEIIGRYPDRRSALLPLLHLVQGEDSYLTPAGLRFCADQLGLTGAEVSAVASFYTMYRRRPTGEYLVGVCTNTLCAVMGGDAIFDRLKEHLGVGHDETTSDGVVTLQHIECNAACDYAPVVMVNWEFFDNQTPESARELVDSLRSDTPKAPTRGAPLCGFRQTSRILAGLPDQRPDEGQGGPGAPTLAGLQVARKNDMQAPPTPGADE.

[2Fe-2S] cluster contacts are provided by cysteine 114, cysteine 119, cysteine 155, and cysteine 159. The disordered stretch occupies residues 211-252 (LAGLPDQRPDEGQGGPGAPTLAGLQVARKNDMQAPPTPGADE).

It belongs to the complex I 24 kDa subunit family. [2Fe-2S] cluster is required as a cofactor.

The catalysed reaction is a quinone + NADH + 5 H(+)(in) = a quinol + NAD(+) + 4 H(+)(out). Functionally, NDH-1 shuttles electrons from NADH, via FMN and iron-sulfur (Fe-S) centers, to quinones in the respiratory chain. The immediate electron acceptor for the enzyme in this species is believed to be menaquinone. Couples the redox reaction to proton translocation (for every two electrons transferred, four hydrogen ions are translocated across the cytoplasmic membrane), and thus conserves the redox energy in a proton gradient. This chain is NADH-quinone oxidoreductase subunit E (nuoE), found in Mycobacterium bovis (strain ATCC BAA-935 / AF2122/97).